The primary structure comprises 303 residues: Ribosomal protein L11 methyltransferase (303 aa).

S-adenosyl-L-methionine-binding residues include threonine 144, glycine 165, aspartate 187, and asparagine 235.

Belongs to the methyltransferase superfamily. PrmA family.

The protein localises to the cytoplasm. It carries out the reaction L-lysyl-[protein] + 3 S-adenosyl-L-methionine = N(6),N(6),N(6)-trimethyl-L-lysyl-[protein] + 3 S-adenosyl-L-homocysteine + 3 H(+). In terms of biological role, methylates ribosomal protein L11. In Prochlorococcus marinus (strain MIT 9312), this protein is Ribosomal protein L11 methyltransferase.